The chain runs to 88 residues: UPF0335 protein M446_5200 (88 aa).

Belongs to the UPF0335 family.

In Methylobacterium sp. (strain 4-46), this protein is UPF0335 protein M446_5200.